Reading from the N-terminus, the 139-residue chain is MKLIAQISRSLSLALFALVLMVGSFVAVMSPAAAETFTVKMGADSGLLQFEPANVTVHPGDTVKWVNNKLPPHNILFDDKQVPGASKELADKLSHSQLMFSPGESYEITFSSDFPAGTYTYYCAPHRGAGMVGKITVEG.

The first 34 residues, 1–34 (MKLIAQISRSLSLALFALVLMVGSFVAVMSPAAA), serve as a signal peptide directing secretion. Residues 35 to 139 (ETFTVKMGAD…GMVGKITVEG (105 aa)) enclose the Plastocyanin-like domain. Cu cation contacts are provided by H73, C123, H126, and M131.

The protein belongs to the plastocyanin family. Cu(2+) is required as a cofactor.

It is found in the cellular thylakoid membrane. Functionally, participates in electron transfer between P700 and the cytochrome b6-f complex in photosystem I. In Leptolyngbya laminosa (Phormidium laminosum), this protein is Plastocyanin (petE).